The sequence spans 98 residues: MPDPDSTLAARLLRIRGRVQGVSYRASAQREAQRLGLSGWVRNRHDGSVEALVCGPADTVERFIAWAHVGPPAASVSAIEVGDAAPTDGAGFDCLPTC.

The Acylphosphatase-like domain maps to 10–96 (ARLLRIRGRV…TDGAGFDCLP (87 aa)). Active-site residues include arginine 25 and asparagine 43.

The protein belongs to the acylphosphatase family.

The catalysed reaction is an acyl phosphate + H2O = a carboxylate + phosphate + H(+). The chain is Acylphosphatase (acyP) from Azoarcus sp. (strain BH72).